A 341-amino-acid polypeptide reads, in one-letter code: Brain-specific homeobox/POU domain protein 3 (341 aa).

A POU-IV box motif is present at residues 55 to 65 (RGAEALAAVDI). Positions 182 to 259 (ETETDPRELE…ILEAWLEEAE (78 aa)) constitute a POU-specific domain. Positions 277-336 (KKRKRTSIAAPEKRSLEAYFAVQPRPSSEKIAAIAEKLDLKKNVVRVWFCNQRQKQKRMK) form a DNA-binding region, homeobox.

This sequence belongs to the POU transcription factor family. Class-4 subfamily.

It is found in the nucleus. Its function is as follows. May play a role in specifying terminally differentiated neuronal phenotypes. The chain is Brain-specific homeobox/POU domain protein 3 (BRN3) from Gallus gallus (Chicken).